The following is a 115-amino-acid chain: Divalent-cation tolerance protein CutA (115 aa).

Cu cation contacts are provided by C19, H86, and H87.

The protein belongs to the CutA family. Homotrimer. It depends on Cu cation as a cofactor.

It is found in the cytoplasm. Involved in resistance toward heavy metals. The polypeptide is Divalent-cation tolerance protein CutA (Salmonella agona (strain SL483)).